Consider the following 93-residue polypeptide: Cell division protein FtsB (93 aa).

Residues 1 to 3 (MRL) lie on the Cytoplasmic side of the membrane. Residues 4-21 (FILVLTLLFGWLQYTLWF) traverse the membrane as a helical segment. At 22-93 (GKNGVSDYYT…FYRIVGEENQ (72 aa)) the chain is on the periplasmic side. A coiled-coil region spans residues 42–75 (VNTKLQARNSEMYAEIDDLKQGLDAIEERARHEL).

It belongs to the FtsB family. Part of a complex composed of FtsB, FtsL and FtsQ.

The protein localises to the cell inner membrane. Functionally, essential cell division protein. May link together the upstream cell division proteins, which are predominantly cytoplasmic, with the downstream cell division proteins, which are predominantly periplasmic. This is Cell division protein FtsB from Vibrio vulnificus (strain YJ016).